We begin with the raw amino-acid sequence, 691 residues long: Pentatricopeptide repeat-containing protein At4g37170 (691 aa).

PPR repeat units lie at residues 84 to 118, 119 to 149, 150 to 184, 185 to 211, 217 to 251, 252 to 286, 287 to 317, 318 to 352, 353 to 383, 384 to 418, 419 to 449, and 455 to 485; these read PAST…GFVP, GIVI…MPNR, DLCS…DSYS, WTAM…MQRV, NIFT…GLDS, DEVL…DVVS, WTSM…CERP, NEYT…GFDP, YSFA…CPKP, DLVS…GTKP, DHVT…ITEK, and TSDH…MPMK. Residues 490-565 form a type E motif region; sequence LWASVLGGCS…RPGSSWTEIK (76 aa). A type E(+) motif region spans residues 566–596; the sequence is RKRHVFIAADTSHPMYNQIVEFLRELRKKMK. The type DYW motif stretch occupies residues 597-691; the sequence is EEGYVPATSL…NGQCSCGDYW (95 aa).

Belongs to the PPR family. PCMP-H subfamily.

The chain is Pentatricopeptide repeat-containing protein At4g37170 (PCMP-H5) from Arabidopsis thaliana (Mouse-ear cress).